The following is a 335-amino-acid chain: UPF0284 protein TON_0688 (335 aa).

Belongs to the UPF0284 family.

This chain is UPF0284 protein TON_0688, found in Thermococcus onnurineus (strain NA1).